A 742-amino-acid polypeptide reads, in one-letter code: 5-methyltetrahydropteroyltriglutamate--homocysteine methyltransferase (742 aa).

5-methyltetrahydropteroyltri-L-glutamate is bound by residues 18–21 (REWK) and Lys112. Residues 420–422 (IGS) and Glu473 each bind L-homocysteine. L-methionine-binding positions include 420–422 (IGS) and Glu473. 5-methyltetrahydropteroyltri-L-glutamate is bound at residue Trp550. Residue Asp588 participates in L-homocysteine binding. Position 588 (Asp588) interacts with L-methionine. Glu594 provides a ligand contact to 5-methyltetrahydropteroyltri-L-glutamate. 3 residues coordinate Zn(2+): His630, Cys632, and Glu654. His683 acts as the Proton donor in catalysis. Zn(2+) is bound at residue Cys715.

It belongs to the vitamin-B12 independent methionine synthase family. Zn(2+) is required as a cofactor.

The enzyme catalyses 5-methyltetrahydropteroyltri-L-glutamate + L-homocysteine = tetrahydropteroyltri-L-glutamate + L-methionine. It participates in amino-acid biosynthesis; L-methionine biosynthesis via de novo pathway; L-methionine from L-homocysteine (MetE route): step 1/1. Catalyzes the transfer of a methyl group from 5-methyltetrahydrofolate to homocysteine resulting in methionine formation. This chain is 5-methyltetrahydropteroyltriglutamate--homocysteine methyltransferase, found in Staphylococcus aureus (strain USA300).